Consider the following 313-residue polypeptide: Porphobilinogen deaminase (313 aa).

Residue Cys242 is modified to S-(dipyrrolylmethanemethyl)cysteine.

It belongs to the HMBS family. In terms of assembly, monomer. It depends on dipyrromethane as a cofactor.

It carries out the reaction 4 porphobilinogen + H2O = hydroxymethylbilane + 4 NH4(+). The protein operates within porphyrin-containing compound metabolism; protoporphyrin-IX biosynthesis; coproporphyrinogen-III from 5-aminolevulinate: step 2/4. Tetrapolymerization of the monopyrrole PBG into the hydroxymethylbilane pre-uroporphyrinogen in several discrete steps. The polypeptide is Porphobilinogen deaminase (Pseudomonas putida (strain ATCC 700007 / DSM 6899 / JCM 31910 / BCRC 17059 / LMG 24140 / F1)).